Reading from the N-terminus, the 383-residue chain is Acetylornithine deacetylase (383 aa).

His80 contacts Zn(2+). The active site involves Asp82. A Zn(2+)-binding site is contributed by Asp112. The active site involves Glu144. Residues Glu145, Glu169, and His355 each coordinate Zn(2+).

Belongs to the peptidase M20A family. ArgE subfamily. As to quaternary structure, homodimer. Requires Zn(2+) as cofactor. It depends on Co(2+) as a cofactor. Glutathione serves as cofactor.

Its subcellular location is the cytoplasm. The catalysed reaction is N(2)-acetyl-L-ornithine + H2O = L-ornithine + acetate. It participates in amino-acid biosynthesis; L-arginine biosynthesis; L-ornithine from N(2)-acetyl-L-ornithine (linear): step 1/1. In terms of biological role, catalyzes the hydrolysis of the amide bond of N(2)-acetylated L-amino acids. Cleaves the acetyl group from N-acetyl-L-ornithine to form L-ornithine, an intermediate in L-arginine biosynthesis pathway, and a branchpoint in the synthesis of polyamines. The chain is Acetylornithine deacetylase from Shigella sonnei (strain Ss046).